A 379-amino-acid polypeptide reads, in one-letter code: AT-rich binding protein (379 aa).

Residues 29-52 (IVCHTCQEELQTQDQFWKHIQDEH) form a C2H2-type 1 zinc finger. A compositionally biased stretch (basic and acidic residues) spans 114–124 (EQREVELHEAH). Disordered regions lie at residues 114–148 (EQRE…DAAK) and 221–267 (PTAS…STTL). Composition is skewed to low complexity over residues 125-143 (QQQQ…QQQQ), 223-242 (ASFV…TTPP), and 249-262 (QQQQ…QQQQ). 2 consecutive C2H2-type zinc fingers follow at residues 312-336 (YICD…RVVH) and 342-365 (FNCD…KKKH).

The protein resides in the nucleus. Functionally, may be a transcription factor for genes having (A+T) stretches in their promoter and/or enhancer regions. Binds to AT rich DNA. This Drosophila willistoni (Fruit fly) protein is AT-rich binding protein.